We begin with the raw amino-acid sequence, 391 residues long: Thyroid hormone receptor alpha-B (391 aa).

Residues 1–32 are modulating; that stretch reads MAQWPEKEEEEQPMFGEEYTGYIPSYLEKDEP. NR C4-type zinc fingers lie at residues 33–53 and 71–95; these read CVVCGDKATGYHYRCITCEGC and CKYDCCCIIDKITRNQCQLCRFKKC. Residues 33-100 constitute a DNA-binding region (nuclear receptor); the sequence is CVVCGDKATG…RFKKCIAVGM (68 aa). The NR LBD domain maps to 143 to 388; sequence AEWELIRMVT…PPLFLEVFED (246 aa).

This sequence belongs to the nuclear hormone receptor family. NR1 subfamily.

The protein resides in the nucleus. Its function is as follows. High affinity receptor for triiodothyronine. This Paralichthys olivaceus (Bastard halibut) protein is Thyroid hormone receptor alpha-B (thra2).